The following is a 327-amino-acid chain: Phenylalanine--tRNA ligase alpha subunit (327 aa).

Residue Glu-252 participates in Mg(2+) binding.

This sequence belongs to the class-II aminoacyl-tRNA synthetase family. Phe-tRNA synthetase alpha subunit type 1 subfamily. Tetramer of two alpha and two beta subunits. The cofactor is Mg(2+).

Its subcellular location is the cytoplasm. The catalysed reaction is tRNA(Phe) + L-phenylalanine + ATP = L-phenylalanyl-tRNA(Phe) + AMP + diphosphate + H(+). This Pectobacterium carotovorum subsp. carotovorum (strain PC1) protein is Phenylalanine--tRNA ligase alpha subunit.